The following is a 410-amino-acid chain: Protein disulfide isomerase CRELD1 (410 aa).

Residues 1-29 form the signal peptide; the sequence is MGMSRRMFLTVYGSLWLLLLLSRPGVSKP. The Extracellular portion of the chain corresponds to 30-352; it reads QLCQTCQNLV…GLFDDITDDE (323 aa). Positions 32–35 match the CXXC motif; it reads CQTC. Disulfide bonds link Cys32/Cys35, Cys141/Cys155, Cys149/Cys167, and Cys169/Cys178. An EGF-like 1 domain is found at 139-179; sequence LSCPGGTEKPCSGNGQCNGDGTRFGTGVCDCYTSYGGPVCM. 2 FU repeats span residues 194–243 and 254–301; these read HLVC…DHCK and SYEC…ELPK. The CXXC signature appears at 264–267; that stretch reads CIGC. Cystine bridges form between Cys264-Cys267, Cys295-Cys309, Cys302-Cys318, and Cys320-Cys331. In terms of domain architecture, EGF-like 2; calcium-binding spans 291–332; that stretch reads DVDECDSELPKCKGSHEECVNTEGSFTCVCEKDYSRIDGMCR. A helical transmembrane segment spans residues 353 to 373; it reads VVVLQQMFFGVVICALATLAA. Lys374 is a topological domain (cytoplasmic). A helical membrane pass occupies residues 375–395; the sequence is GDMVFTAIFIGAVAAMAGYWL. Residues 396 to 410 lie on the Extracellular side of the membrane; that stretch reads SEKGDRALDSFMKGR.

It belongs to the CRELD family.

It is found in the membrane. The enzyme catalyses Catalyzes the rearrangement of -S-S- bonds in proteins.. Functionally, protein disulfide isomerase. Promotes the localization of acetylcholine receptors (AChRs) to the plasma membrane. The polypeptide is Protein disulfide isomerase CRELD1 (creld1) (Xenopus tropicalis (Western clawed frog)).